Here is a 329-residue protein sequence, read N- to C-terminus: Olfactory receptor 5AL1 (329 aa).

Residues 1–44 (MCALKGFLEENFYTYSVAKGNHSTVYEFILLGLTDNAELQVTLF) are Extracellular-facing. An N-linked (GlcNAc...) asparagine glycan is attached at asparagine 21. Residues 45–65 (GIFLVVYLASFMGNFGLIMLI) traverse the membrane as a helical segment. The Cytoplasmic portion of the chain corresponds to 66–73 (QISPQLHT). The helical transmembrane segment at 74 to 94 (PMYFFLSHLAFVDFSFTSSVA) threads the bilayer. At 95–113 (PNTLVNFLCEVKSITFYAC) the chain is on the extracellular side. Cysteine 113 and cysteine 205 are joined by a disulfide. A helical transmembrane segment spans residues 114-134 (AIQVCCFITFVVCELYLLSIM). Over 135-157 (AYDRYVAICNPLLYVILIPRKLC) the chain is Cytoplasmic. A helical transmembrane segment spans residues 158–178 (IKLIASTYVYGFTVGLVQTVA). The Extracellular portion of the chain corresponds to 179 to 220 (TSYLSFCDSNVINHFYHDDVPLVALACSDTHVKELMLLIIAG). A helical transmembrane segment spans residues 221-241 (FNTLCSLVIVLISYGFIFFAI). Over 242–253 (LRIHSAEGRQKA) the chain is Cytoplasmic. A helical membrane pass occupies residues 254–274 (FSTSASHLTSITIFYGTIIFM). At 275 to 287 (YPQPKSSHSLNMD) the chain is on the extracellular side. Residues 288 to 308 (KVASVFNVVVIPTLNPLIYSL) traverse the membrane as a helical segment. The Cytoplasmic segment spans residues 309–329 (RNQEVKNALKRIIEKLCLAVK).

Belongs to the G-protein coupled receptor 1 family.

Its subcellular location is the cell membrane. Functionally, odorant receptor. The protein is Olfactory receptor 5AL1 (OR5AL1) of Homo sapiens (Human).